The following is a 383-amino-acid chain: MNELEFVTKHRRHLHQHPELSLHEFETTAYIKAFLDSLNIKYDCPLETGVIAYLEGNGSHTIAYRADIDALPILEENDVPYRSQSDHVMHACGHDGHTTTLMLFVQRCKDMQDAGQLPQNVVFIFQPAEETGGGANRLIKAGAFDKYPIEAVFGIHVNPFADEGIAVIRDEEITASATEYRFFLTGLSSHVADKEQGHSCGEALQHVLTQISQIQQFHLNGLKRNIVHIGHFKAGEAINTVPSNGYLEGTIRTYDIDDLTIVKNQMHKIAESVKLLFNVDCEVKFAEGYPPTINSPKLRTQIEDALIKADLNVYDKPTPFLFGEDFSFYGQQLAPAYFVFIGTRNEDKGFVTGLHTSYLNFDEKVLINVVNFYENLLNNYKEV.

Belongs to the peptidase M20 family.

This is an uncharacterized protein from Staphylococcus aureus (strain MRSA252).